The primary structure comprises 93 residues: Small ribosomal subunit protein uS19 (93 aa).

It belongs to the universal ribosomal protein uS19 family.

Its function is as follows. Protein S19 forms a complex with S13 that binds strongly to the 16S ribosomal RNA. The chain is Small ribosomal subunit protein uS19 from Blochmanniella floridana.